The primary structure comprises 213 residues: Outer-membrane lipoprotein carrier protein (213 aa).

Positions 1–18 (MKYFATICIAAYAGLAGA) are cleaved as a signal peptide.

The protein belongs to the LolA family. As to quaternary structure, monomer.

The protein localises to the periplasm. Functionally, participates in the translocation of lipoproteins from the inner membrane to the outer membrane. Only forms a complex with a lipoprotein if the residue after the N-terminal Cys is not an aspartate (The Asp acts as a targeting signal to indicate that the lipoprotein should stay in the inner membrane). The protein is Outer-membrane lipoprotein carrier protein of Albidiferax ferrireducens (strain ATCC BAA-621 / DSM 15236 / T118) (Rhodoferax ferrireducens).